We begin with the raw amino-acid sequence, 279 residues long: 3-methyl-2-oxobutanoate hydroxymethyltransferase (279 aa).

Aspartate 43 and aspartate 82 together coordinate Mg(2+). 3-methyl-2-oxobutanoate is bound by residues 43–44, aspartate 82, and lysine 112; that span reads DS. Glutamate 114 serves as a coordination point for Mg(2+). Glutamate 181 serves as the catalytic Proton acceptor.

This sequence belongs to the PanB family. In terms of assembly, homodecamer; pentamer of dimers. Mg(2+) serves as cofactor.

It localises to the cytoplasm. It carries out the reaction 3-methyl-2-oxobutanoate + (6R)-5,10-methylene-5,6,7,8-tetrahydrofolate + H2O = 2-dehydropantoate + (6S)-5,6,7,8-tetrahydrofolate. It functions in the pathway cofactor biosynthesis; (R)-pantothenate biosynthesis; (R)-pantoate from 3-methyl-2-oxobutanoate: step 1/2. In terms of biological role, catalyzes the reversible reaction in which hydroxymethyl group from 5,10-methylenetetrahydrofolate is transferred onto alpha-ketoisovalerate to form ketopantoate. This Halalkalibacterium halodurans (strain ATCC BAA-125 / DSM 18197 / FERM 7344 / JCM 9153 / C-125) (Bacillus halodurans) protein is 3-methyl-2-oxobutanoate hydroxymethyltransferase.